The chain runs to 599 residues: Membrane protein insertase YidC (599 aa).

Residues 6–26 (NYFIAIALSVVIVLAWQFLYM) traverse the membrane as a helical segment. Residues 35–78 (RAEEARQAQQQTTQQQPAPGAAPGATVEGAPPASSTQAAATATR) form a disordered region. Positions 41–76 (QAQQQTTQQQPAPGAAPGATVEGAPPASSTQAAATA) are enriched in low complexity. 4 consecutive transmembrane segments (helical) span residues 378-398 (FGVA…PLAS), 448-468 (WPML…YVTI), 501-521 (VPHF…MFLQ), and 536-556 (IFTW…AGLV).

It belongs to the OXA1/ALB3/YidC family. Type 1 subfamily. As to quaternary structure, interacts with the Sec translocase complex via SecD. Specifically interacts with transmembrane segments of nascent integral membrane proteins during membrane integration.

The protein localises to the cell inner membrane. Required for the insertion and/or proper folding and/or complex formation of integral membrane proteins into the membrane. Involved in integration of membrane proteins that insert both dependently and independently of the Sec translocase complex, as well as at least some lipoproteins. Aids folding of multispanning membrane proteins. The chain is Membrane protein insertase YidC from Agrobacterium fabrum (strain C58 / ATCC 33970) (Agrobacterium tumefaciens (strain C58)).